Here is a 365-residue protein sequence, read N- to C-terminus: uncharacterized protein (365 aa).

Disordered stretches follow at residues 218–262 and 315–342; these read QRPS…AEAA and PRLPEPPVPPDGSGSRMEFRNLSDRTPC. Basic and acidic residues-rich tracts occupy residues 239 to 257 and 331 to 341; these read PDNRVQEHREELSQTKDPE and MEFRNLSDRTP.

This is an uncharacterized protein from Mus musculus (Mouse).